The sequence spans 168 residues: Putative F-box protein At1g30945 (168 aa).

The 48-residue stretch at 5–52 (KTFDSISNDLFLEILLRLSTKSIDRSRCVSKQWASILCSQDFTESEKF) folds into the F-box domain.

The polypeptide is Putative F-box protein At1g30945 (Arabidopsis thaliana (Mouse-ear cress)).